The sequence spans 445 residues: Fibrinogen gamma chain (445 aa).

The N-terminal stretch at 1-25 (MNWSLQLRSFILCWALLLLSPTGLA) is a signal peptide. Residue Asn78 is glycosylated (N-linked (GlcNAc...) asparagine). Residues 170–416 (RIHDTTGKDC…ETTMKIIPFN (247 aa)) form the Fibrinogen C-terminal domain. A disulfide bridge links Cys179 with Cys208. Ca(2+) contacts are provided by Asp344, Asp346, and Gly350. Cysteines 352 and 365 form a disulfide. A gamma-chain polymerization, binding amino end of another fibrin alpha chain region spans residues 400-422 (TRWYSMKETTMKIIPFNRLSIGD). An Isoglutamyl lysine isopeptide (Gln-Lys) (interchain with K-432) cross-link involves residue Gln424. The disordered stretch occupies residues 424-445 (QQHHMGGSKQVSVEHEVDVEYP). At Ser431 the chain carries Phosphoserine. Lys432 participates in a covalent cross-link: Isoglutamyl lysine isopeptide (Lys-Gln) (interchain with Q-424). Residues 435-445 (SVEHEVDVEYP) show a composition bias toward basic and acidic residues.

In terms of assembly, heterohexamer; disulfide linked. Contains 2 sets of 3 non-identical chains (alpha, beta and gamma). The 2 heterotrimers are in head to head conformation with the N-termini in a small central domain. Conversion of fibrinogen to fibrin is triggered by thrombin, which cleaves fibrinopeptides A and B from alpha and beta chains, and thus exposes the N-terminal polymerization sites responsible for the formation of the soft clot. The soft clot is converted into the hard clot by factor XIIIA which catalyzes the epsilon-(gamma-glutamyl)lysine cross-linking between gamma chains (stronger) and between alpha chains (weaker) of different monomers.

It localises to the secreted. Together with fibrinogen alpha (FGA) and fibrinogen beta (FGB), polymerizes to form an insoluble fibrin matrix. Has a major function in hemostasis as one of the primary components of blood clots. In addition, functions during the early stages of wound repair to stabilize the lesion and guide cell migration during re-epithelialization. Was originally thought to be essential for platelet aggregation, based on in vitro studies using anticoagulated blood. However, subsequent studies have shown that it is not absolutely required for thrombus formation in vivo. Enhances expression of SELP in activated platelets via an ITGB3-dependent pathway. Maternal fibrinogen is essential for successful pregnancy. Fibrin deposition is also associated with infection, where it protects against IFNG-mediated hemorrhage. May also facilitate the antibacterial immune response via both innate and T-cell mediated pathways. This is Fibrinogen gamma chain (Fgg) from Rattus norvegicus (Rat).